Consider the following 483-residue polypeptide: Uridine/cytidine kinase UKL1, chloroplastic (483 aa).

Residues methionine 1–asparagine 47 constitute a chloroplast transit peptide. Residues proline 59 to glycine 264 form a uridine kinase region. Residues asparagine 274 to glutamate 483 form a uracil phosphoribosyltransferase region. Residues lysine 298, arginine 307, and cysteine 341–leucine 344 each bind GTP. Residues arginine 351 and arginine 376 each contribute to the 5-phospho-alpha-D-ribose 1-diphosphate site. GTP is bound at residue arginine 396. 5-phospho-alpha-D-ribose 1-diphosphate is bound by residues aspartate 402, threonine 407 to serine 410, and glutamate 473. Glycine 472–phenylalanine 474 contributes to the uracil binding site.

It in the N-terminal section; belongs to the uridine kinase family. The protein in the C-terminal section; belongs to the UPRTase family.

Its subcellular location is the plastid. It localises to the chloroplast. It catalyses the reaction cytidine + ATP = CMP + ADP + H(+). The catalysed reaction is uridine + ATP = UMP + ADP + H(+). It participates in pyrimidine metabolism; CTP biosynthesis via salvage pathway; CTP from cytidine: step 1/3. Its pathway is pyrimidine metabolism; UMP biosynthesis via salvage pathway; UMP from uridine: step 1/1. Its function is as follows. Involved in the pyrimidine salvage pathway. Phosphorylates uridine to uridine monophosphate (UMP). Phosphorylates cytidine to cytidine monophosphate (CMP). Does not possess uracil phosphoribosyltransferase (UPRTase) activity that catalyzes the conversion of uracil and 5-phospho-alpha-D-ribose 1-diphosphate (PRPP) to UMP and diphosphate. This is Uridine/cytidine kinase UKL1, chloroplastic from Arabidopsis thaliana (Mouse-ear cress).